Here is a 319-residue protein sequence, read N- to C-terminus: Mercury resistance probable Hg transport protein (319 aa).

Hg(2+)-binding residues include Cys-298, Cys-299, Cys-318, and Cys-319.

The polypeptide is Mercury resistance probable Hg transport protein (Streptomyces lividans).